We begin with the raw amino-acid sequence, 150 residues long: MQVIFLNDVRGKGKRGQIKNVPDGYAQNFLIKKGLAKEATKAAINTLKAEQKSEAARAAEELAEAKQVKTVLEADETVVELKAKAGTDGRLFGSIPSKQIATALADQYQVKLDKRKIELPEPIRVLGYTNVPVKLHPEVTAKIRVHVVEK.

Belongs to the bacterial ribosomal protein bL9 family.

Its function is as follows. Binds to the 23S rRNA. This is Large ribosomal subunit protein bL9 from Lactiplantibacillus plantarum (strain ATCC BAA-793 / NCIMB 8826 / WCFS1) (Lactobacillus plantarum).